A 92-amino-acid polypeptide reads, in one-letter code: Cell division topological specificity factor (92 aa).

Belongs to the MinE family.

Functionally, prevents the cell division inhibition by proteins MinC and MinD at internal division sites while permitting inhibition at polar sites. This ensures cell division at the proper site by restricting the formation of a division septum at the midpoint of the long axis of the cell. The sequence is that of Cell division topological specificity factor from Colwellia psychrerythraea (strain 34H / ATCC BAA-681) (Vibrio psychroerythus).